A 129-amino-acid polypeptide reads, in one-letter code: Cytochrome b5 (129 aa).

One can recognise a Cytochrome b5 heme-binding domain in the interval 8-84 (TTIYTHEEVA…LEKLYIGNLK (77 aa)). Residues His43 and His67 each coordinate heme. A helical membrane pass occupies residues 104 to 124 (GINFPLIAVGVFLAAFGVYYY).

It belongs to the cytochrome b5 family.

The protein resides in the endoplasmic reticulum membrane. It localises to the microsome membrane. Functionally, membrane bound hemoprotein which function as an electron carrier for several membrane bound oxygenases. This chain is Cytochrome b5 (Cytb5), found in Candida tropicalis (Yeast).